The primary structure comprises 177 residues: ATP synthase subunit delta (177 aa).

The protein belongs to the ATPase delta chain family. F-type ATPases have 2 components, F(1) - the catalytic core - and F(0) - the membrane proton channel. F(1) has five subunits: alpha(3), beta(3), gamma(1), delta(1), epsilon(1). F(0) has three main subunits: a(1), b(2) and c(10-14). The alpha and beta chains form an alternating ring which encloses part of the gamma chain. F(1) is attached to F(0) by a central stalk formed by the gamma and epsilon chains, while a peripheral stalk is formed by the delta and b chains.

The protein resides in the cell inner membrane. Functionally, f(1)F(0) ATP synthase produces ATP from ADP in the presence of a proton or sodium gradient. F-type ATPases consist of two structural domains, F(1) containing the extramembraneous catalytic core and F(0) containing the membrane proton channel, linked together by a central stalk and a peripheral stalk. During catalysis, ATP synthesis in the catalytic domain of F(1) is coupled via a rotary mechanism of the central stalk subunits to proton translocation. This protein is part of the stalk that links CF(0) to CF(1). It either transmits conformational changes from CF(0) to CF(1) or is implicated in proton conduction. This is ATP synthase subunit delta from Citrobacter koseri (strain ATCC BAA-895 / CDC 4225-83 / SGSC4696).